Here is a 693-residue protein sequence, read N- to C-terminus: F-box protein MAX2 (693 aa).

Residues S3–I50 form the F-box domain. LRR repeat units lie at residues L9–S34, T49–F74, L75–F100, V110–R135, S141–N167, F168–T196, T200–C225, F232–D257, D274–V299, D302–Q327, C332–N356, S357–G382, C383–C409, and C410–C436. The disordered stretch occupies residues E445 to E465. LRR repeat units lie at residues C480–I505, G508–I532, R541–C565, and D608–G637.

As to quaternary structure, part of a SCF (SKP1-cullin-F-box) protein ligase complex. Interacts with SKP1A/ASK1. Interacts with CUL1. Interacts with SMXL6, SMXL7 and SMXL8. Interacts with D14. Forms a complex with D14 and SKP1A/ASK1 in presence of strigolactone. As to expression, expressed in the vasculature of growing leaves and roots, rosette axillary bud, flowers, siliques, funiculi and stems.

Its subcellular location is the nucleus. The protein operates within protein modification; protein ubiquitination. Its function is as follows. Component of SCF(ASK-cullin-F-box) E3 ubiquitin ligase complexes, which may mediate the ubiquitination and subsequent proteasomal degradation of target proteins. Promotes the senescence. Is necessary for responses to strigolactones and karrikins. Contributes to the selective repression of axillary shoots and moderates the branching by regulating negatively the auxin transport in primary stems, in an AXR1-independent manner. Required for the progression of leaf senescence mediated by methyl jasmonate. Required at each node to suppress axillary bud growth. This Arabidopsis thaliana (Mouse-ear cress) protein is F-box protein MAX2.